The primary structure comprises 469 residues: MKDLRMVFKSRITNIHFVGIAGSGMSGIAEVLHNLGYGVSGSDISQNKITDRLKEMGCQIYYKHHQDNIKNAQAVVISSAIKDNNPEVIKAHQLNIPIVPRAEMLAELMRFRFGIAIAGTHGKTTTTSIITHILNMAELDPTYIIGGILNSSGINAKLGESDYLIAEADESDASFLHLQSMLSVITNIDHEHMATYNNDYQKLKDAFVSFSANLPFYGTCIICIDDKGVNEILSDIHRPIITYGFNNGADIQAINIKQVDMQMHFDIIYDKYTKPFPIKLNLIGKHNILNTLAAIGICCELNIKVNIIQKALANFSGVARRLDYHGKLNINNLQISLFDDYGHHPKEISAVFESLKDTYQNKRLVVIFQPHRYSRTHDLFDNFTRILSTADALILLDIYPAQEKPIAHINSSTLADAIRKYSSLNPVVIKNQKKILDILPNIVHNNDVLLTLGAGDIHTLPELLKFNYT.

G119–T125 is an ATP binding site.

It belongs to the MurCDEF family.

The protein localises to the cytoplasm. It catalyses the reaction UDP-N-acetyl-alpha-D-muramate + L-alanine + ATP = UDP-N-acetyl-alpha-D-muramoyl-L-alanine + ADP + phosphate + H(+). The protein operates within cell wall biogenesis; peptidoglycan biosynthesis. Cell wall formation. The sequence is that of UDP-N-acetylmuramate--L-alanine ligase from Vesicomyosocius okutanii subsp. Calyptogena okutanii (strain HA).